The chain runs to 83 residues: Bublin coiled-coil protein (83 aa).

The interval 1–25 is disordered; the sequence is MSGPNGDLGMPVDAGTEGENDSFGE. Residues 25 to 74 adopt a coiled-coil conformation; the sequence is EAEYAAINSMLDQINSCLDHLEEKNDHLHARLQELLESNRQTRLEFQQQL. Serine 82 carries the phosphoserine modification.

This sequence belongs to the UPF0184 (EST00098) family.

It is found in the cell junction. The protein localises to the cytoplasm. It localises to the cytoskeleton. In terms of biological role, essential for intermediate filament organization in intestinal cells, interacts with intermediate filament and regulates intestinal lumen morphology. This Mus musculus (Mouse) protein is Bublin coiled-coil protein.